The following is a 367-amino-acid chain: MSEHQSLPAPEASTEVRVAIVGVGNCASSLVQGVEYYYNADDTSTVPGLMHVRFGPYHVRDVKFVAAFDVDAKKVGFDLSDAIFASENNTIKIADVAPTNVIVQRGPTLDGIGKYYADTIELSDAEPVDVVQALKEAKVDVLVSYLPVGSEEADKFYAQCAIDAGVAFVNALPVFIASDPVWAKKFTDARVPIVGDDIKSQVGATITHRVLAKLFEDRGVQLDRTMQLNVGGNMDFLNMLERERLESKKISKTQAVTSNLKREFKTKDVHIGPSDHVGWLDDRKWAYVRLEGRAFGDVPLNLEYKLEVWDSPNSAGVIIDAVRAAKIAKDRGIGGPVIPASAYLMKSPPEQLPDDIARAQLEEFIIG.

S2 is subject to N-acetylserine. Residue K73 forms an Isoglutamyl lysine isopeptide (Lys-Gln) (interchain with Q-Cter in protein Pup) linkage. Positions 78, 137, 157, 200, 235, and 248 each coordinate NAD(+).

This sequence belongs to the myo-inositol 1-phosphate synthase family. It depends on NAD(+) as a cofactor. In terms of processing, pupylated at Lys-73 by the prokaryotic ubiquitin-like protein Pup, which leads to its degradation by the proteasome.

It catalyses the reaction D-glucose 6-phosphate = 1D-myo-inositol 3-phosphate. Its function is as follows. Key enzyme in myo-inositol biosynthesis pathway that catalyzes the conversion of glucose 6-phosphate to 1D-myo-inositol 3-phosphate in a NAD-dependent manner. The chain is Inositol-3-phosphate synthase (ino1) from Mycobacterium tuberculosis (strain ATCC 25618 / H37Rv).